Reading from the N-terminus, the 303-residue chain is Methyltransferase ktnA (303 aa).

This sequence belongs to the class I-like SAM-binding methyltransferase superfamily. It depends on S-adenosyl-L-methionine as a cofactor.

Non-reducing polyketide synthase; part of the gene cluster that mediates the biosynthesis of the bicoumarin kotanin. The non-reducing polyketide synthase ktnS first catalyzes the formation of the pentaketidic 4,7-dihydroxy-5-methylcoumarin from acetyl coenzyme A and 4 malonyl coenzyme A molecules. Further O-methylation by ktnB leads to the formation of 7-demethylsiderin. Then, an oxidative phenol coupling catalyzed by the cytochrome P450 monooxygenase ktnC forms the 8,8'-dimer P-orlandin via dimerization the monomeric precursor, 7-demethylsiderin. P-orlandin is subsequently O-methylated in a stepwise fashion to demethylkotanin and kotanin. The function of ktnA within the pathway has not been determined yet. The sequence is that of Methyltransferase ktnA from Aspergillus niger (strain ATCC MYA-4892 / CBS 513.88 / FGSC A1513).